The chain runs to 99 residues: MNQERVFKVLLGPHISEKATVLADKQGQFVFKVATDATKLEIKKAVESLFNVKVERVTTQNVLGKSKRTARGLGKRNDWKKAVISLQPGQDLDFTSSAE.

Belongs to the universal ribosomal protein uL23 family. Part of the 50S ribosomal subunit. Contacts protein L29, and trigger factor when it is bound to the ribosome.

One of the early assembly proteins it binds 23S rRNA. One of the proteins that surrounds the polypeptide exit tunnel on the outside of the ribosome. Forms the main docking site for trigger factor binding to the ribosome. This is Large ribosomal subunit protein uL23 from Ectopseudomonas mendocina (strain ymp) (Pseudomonas mendocina).